The chain runs to 299 residues: Probable inactive heme oxygenase 2, chloroplastic (299 aa).

Residues 1 to 15 are compositionally biased toward low complexity; it reads MASLLRPTPLLSTPR. Disordered stretches follow at residues 1–20, 45–70, and 96–126; these read MASL…LTHS, LCRS…KQYP, and DLSE…EETW. The N-terminal 83 residues, 1–83, are a transit peptide targeting the chloroplast; the sequence is MASLLRPTPL…IGITEEMRFV (83 aa). Over residues 46–57 the composition is skewed to polar residues; that stretch reads CRSTPTPSQQKA. Residues 58–67 show a composition bias toward basic residues; it reads SQRKRTRYRK. Acidic residues predominate over residues 105-122; that stretch reads EKEEEEEEEDDDDDDEVK.

The protein belongs to the heme oxygenase family. In terms of tissue distribution, widely expressed at low levels.

The protein resides in the plastid. It localises to the chloroplast. Its function is as follows. Probable inactive heme oxygenase. Binds protoporphyrin IX, a precursor for both heme and chlorophyll biosynthesis. Plays a minor role in phytochrome assembly and photomorphogenesis. This chain is Probable inactive heme oxygenase 2, chloroplastic (HO2), found in Arabidopsis thaliana (Mouse-ear cress).